A 358-amino-acid chain; its full sequence is Chorismate synthase (358 aa).

Position 46 (R46) interacts with NADP(+). FMN is bound by residues 123 to 125, 235 to 236, G275, 290 to 294, and R316; these read RSS, NA, and KATPS.

This sequence belongs to the chorismate synthase family. As to quaternary structure, homotetramer. FMNH2 serves as cofactor.

It catalyses the reaction 5-O-(1-carboxyvinyl)-3-phosphoshikimate = chorismate + phosphate. It participates in metabolic intermediate biosynthesis; chorismate biosynthesis; chorismate from D-erythrose 4-phosphate and phosphoenolpyruvate: step 7/7. Functionally, catalyzes the anti-1,4-elimination of the C-3 phosphate and the C-6 proR hydrogen from 5-enolpyruvylshikimate-3-phosphate (EPSP) to yield chorismate, which is the branch point compound that serves as the starting substrate for the three terminal pathways of aromatic amino acid biosynthesis. This reaction introduces a second double bond into the aromatic ring system. The polypeptide is Chorismate synthase (Aliarcobacter butzleri (strain RM4018) (Arcobacter butzleri)).